We begin with the raw amino-acid sequence, 293 residues long: UDP-N-acetylglucosamine transferase subunit ALG13 (293 aa).

Belongs to the glycosyltransferase 28 family. In terms of assembly, heterodimer with ALG14 to form a functional enzyme.

It is found in the endoplasmic reticulum. The catalysed reaction is an N-acetyl-alpha-D-glucosaminyl-diphospho-di-trans,poly-cis-dolichol + UDP-N-acetyl-alpha-D-glucosamine = an N,N'-diacetylchitobiosyl-diphospho-di-trans,poly-cis-dolichol + UDP + H(+). Functionally, involved in protein N-glycosylation. Essential for the second step of the dolichol-linked oligosaccharide pathway. The polypeptide is UDP-N-acetylglucosamine transferase subunit ALG13 (ALG13) (Candida albicans (strain SC5314 / ATCC MYA-2876) (Yeast)).